A 363-amino-acid chain; its full sequence is Transcription factor PIF6 (363 aa).

2 disordered regions span residues 154-204 (SEGS…RNDI) and 340-363 (IPNP…KTNR). Over residues 178–188 (RTRKALVKRKR) the composition is skewed to basic residues. The 50-residue stretch at 188–237 (RNAEAYNSPERNQRNDINKKMRTLQNLLPNSHKDDNESMLDEAINYMTNL) folds into the bHLH domain. Over residues 340-350 (IPNPNSLSNLD) the composition is skewed to polar residues. Basic residues predominate over residues 354-363 (LHKKSRKTNR).

As to quaternary structure, homodimer. Interacts with APRR1/TOC1. Binds to RGL2 and RGA. Associates to PTAC12/HMR/PAP5 which acts as a transcriptional coactivator. In terms of tissue distribution, mainly expressed in fruits and flowers and, to a lower extent, in leaves, stems, seedlings and roots.

Its subcellular location is the nucleus. Its function is as follows. Transcription factor. The sequence is that of Transcription factor PIF6 from Arabidopsis thaliana (Mouse-ear cress).